A 142-amino-acid chain; its full sequence is Large-conductance mechanosensitive channel (142 aa).

3 helical membrane passes run 14-34, 38-58, and 82-102; these read VVDLAVGVIIGAAFGAIVNSL, VIMPIIGAITGGLDFSNYYIP, and GQFLTLAVNFTIIAFVLFMVI.

Belongs to the MscL family. As to quaternary structure, homopentamer.

It is found in the cell inner membrane. In terms of biological role, channel that opens in response to stretch forces in the membrane lipid bilayer. May participate in the regulation of osmotic pressure changes within the cell. The polypeptide is Large-conductance mechanosensitive channel (Methylorubrum populi (strain ATCC BAA-705 / NCIMB 13946 / BJ001) (Methylobacterium populi)).